Consider the following 868-residue polypeptide: MADVTVKQLAQVVGIPVERLLNQLQEAGLSFTDDQQTVNEEQKRILLNHLKGSSNRDISAAPERITLRRKSMSQVTVGHDMHSGKTVNIEVRKKKTFIKRSAIPEQAEIEEPVVPPVVEEPVHEEITVVSEVSAETPELKETEEHPVIEPVAELDETVKEEEKISLEENTAESQDELTHANTDVIENLVDVVEEAIPASKKEEVKPEKVSKKKHLEQTDSDISEFKKGKKKPKYHTFEHDEEEQELHRRGGRSKFKKKKGTEKSDKYREAEETLTHGFALPTAPIVREVLIPETITVAELAKRMSVKAAEVIKVMMSLGAMATINQVIDQETSVIVVEEMGHKPVIIKEDAVETGLGEAISKGTKTEGRAPVVTIMGHVDHGKTSLLDYIRRTKVAAGEAGGITQHIGAYHVSTPKGNITFLDTPGHAAFTAMRARGAQATDIVILIVAADDGVKPQTIEAIQHAKAAKVPIIVAINKMDKPDADPERVMNELSVQEVIPEAWGGDTMFVNISAKSGMGIDDLLDAILLQSEVLELKAVTDGAAKGVVIESRLDKGRGPVATVLVQSGTLHKGDILLAGFQYGRVRALVSDNGDLVDSAGPSIPVEVLGLSAIPHAGDEAVVVPDEKKAREVALFRQGRFRDVKLARRQKTSIEGIMENMTATESKVLNIVLKADVQGSLEAISDALTKLSTDEVKVEVISSGVGGITESDVHLAIASNAILIGFNVRADGTAKRLAEQESVSIHYYSVIYDIVDQIKGALTGMLAPQFKEEIVGIAEVRDVFKSPKIGAIAGCMVIEGVVKRNNPIRVLRSNVVIYEGTLESLRRFKDDVLEVRQGFECGIGVKNYNDVKPGDLIEVFETVEIKRDL.

The segment covering 199–209 (SKKEEVKPEKV) has biased composition (basic and acidic residues). The interval 199–269 (SKKEEVKPEK…GTEKSDKYRE (71 aa)) is disordered. A compositionally biased stretch (basic residues) spans 249 to 260 (RGGRSKFKKKKG). The tr-type G domain occupies 368-537 (GRAPVVTIMG…LLQSEVLELK (170 aa)). Residues 377-384 (GHVDHGKT) form a G1 region. 377-384 (GHVDHGKT) contributes to the GTP binding site. The interval 402-406 (GITQH) is G2. The G3 stretch occupies residues 423–426 (DTPG). Residues 423 to 427 (DTPGH) and 477 to 480 (NKMD) each bind GTP. The tract at residues 477–480 (NKMD) is G4. The segment at 513–515 (SAK) is G5.

Belongs to the TRAFAC class translation factor GTPase superfamily. Classic translation factor GTPase family. IF-2 subfamily.

The protein localises to the cytoplasm. One of the essential components for the initiation of protein synthesis. Protects formylmethionyl-tRNA from spontaneous hydrolysis and promotes its binding to the 30S ribosomal subunits. Also involved in the hydrolysis of GTP during the formation of the 70S ribosomal complex. This is Translation initiation factor IF-2 from Legionella pneumophila (strain Paris).